The chain runs to 82 residues: ATP synthase subunit c (82 aa).

A run of 2 helical transmembrane segments spans residues 6–26 (AAAS…GPGI) and 57–77 (LAFM…LLFA).

Belongs to the ATPase C chain family. F-type ATPases have 2 components, F(1) - the catalytic core - and F(0) - the membrane proton channel. F(1) has five subunits: alpha(3), beta(3), gamma(1), delta(1), epsilon(1). F(0) has four main subunits: a(1), b(1), b'(1) and c(10-14). The alpha and beta chains form an alternating ring which encloses part of the gamma chain. F(1) is attached to F(0) by a central stalk formed by the gamma and epsilon chains, while a peripheral stalk is formed by the delta, b and b' chains.

It localises to the cell inner membrane. Functionally, f(1)F(0) ATP synthase produces ATP from ADP in the presence of a proton or sodium gradient. F-type ATPases consist of two structural domains, F(1) containing the extramembraneous catalytic core and F(0) containing the membrane proton channel, linked together by a central stalk and a peripheral stalk. During catalysis, ATP synthesis in the catalytic domain of F(1) is coupled via a rotary mechanism of the central stalk subunits to proton translocation. In terms of biological role, key component of the F(0) channel; it plays a direct role in translocation across the membrane. A homomeric c-ring of between 10-14 subunits forms the central stalk rotor element with the F(1) delta and epsilon subunits. The chain is ATP synthase subunit c from Gloeobacter violaceus (strain ATCC 29082 / PCC 7421).